Consider the following 223-residue polypeptide: MKTIQIAIDGPASSGKSTVAKIIAKDFGFTYLDTGAMYRAATYMALKNQLVVEEVEALLALLDQHPISFGRSETGDQLVFVGDVDITHPIRENEVTNHVSAIAAIPEVREKLVSLQQEIAQQGGIVMDGRDIGTVVLPQAELKIFLVASVDERAERRYKENIAKGIETDLETLKKEIAARDYKDSHRETSPLKQAEDAVYLDTTGLNIQEVVEKIKAEAEKRM.

Position 10–18 (10–18 (GPASSGKST)) interacts with ATP.

The protein belongs to the cytidylate kinase family. Type 1 subfamily.

The protein localises to the cytoplasm. It catalyses the reaction CMP + ATP = CDP + ADP. The enzyme catalyses dCMP + ATP = dCDP + ADP. The polypeptide is Cytidylate kinase (Streptococcus pneumoniae (strain Taiwan19F-14)).